The primary structure comprises 205 residues: Beta-crystallin B2 (205 aa).

Position 2 is an N-acetylalanine (alanine 2). Positions 2–16 (ASDHQTQAGKPQPLN) are N-terminal arm. 2 Beta/gamma crystallin 'Greek key' domains span residues 17–56 (PKII…LVQA) and 57–101 (GPWV…RPIK). The segment at 102 to 106 (VDSQE) is connecting peptide. Beta/gamma crystallin 'Greek key' domains follow at residues 107–148 (HKII…RVQS) and 149–191 (GTWV…RRIR). The C-terminal arm stretch occupies residues 193-205 (MQWHQRGAFHPSS).

The protein belongs to the beta/gamma-crystallin family. Homo/heterodimer, or complexes of higher-order. The structure of beta-crystallin oligomers seems to be stabilized through interactions between the N-terminal arms.

Its function is as follows. Crystallins are the dominant structural components of the vertebrate eye lens. This chain is Beta-crystallin B2 (CRYBB2), found in Mesocricetus auratus (Golden hamster).